Consider the following 312-residue polypeptide: MDKEWLEVCIYTSSEALEAISGILYNTGVKGVSIEDPKDIEFKRKHPGDWDYFDETLLKVKDTAIVKGYYKEDDKFNEYLDYIKKSVSNLDQFGIDKGEGLVEVHKVNEEDWENNWKKYYKPTKVSNKIVIKPIWENYDKKQEEIIVELDPGMAFGTGTHETTRMCINALEKYIKEDRTVFDIGCGSGILSIAAAKLGAKHVIGVDLDPVAVKSSKENIKYNNLDNIEILEGNLMEVVEGRANIVVANIIADVIIFLTEGVKAFIEKGGYFIASGIINSRKEDVIKKLEETGFIIEEVREEGEWACIVSKIN.

The S-adenosyl-L-methionine site is built by Thr-163, Gly-184, Asp-206, and Asn-248.

This sequence belongs to the methyltransferase superfamily. PrmA family.

It is found in the cytoplasm. It carries out the reaction L-lysyl-[protein] + 3 S-adenosyl-L-methionine = N(6),N(6),N(6)-trimethyl-L-lysyl-[protein] + 3 S-adenosyl-L-homocysteine + 3 H(+). In terms of biological role, methylates ribosomal protein L11. In Clostridium botulinum (strain Hall / ATCC 3502 / NCTC 13319 / Type A), this protein is Ribosomal protein L11 methyltransferase.